The primary structure comprises 366 residues: LKEEAFILGMDVSFMDEIEQHGGSYRDENGQQEDLLTLLKMGDANAIRLRIWNDPVGGFCNLERTVAVAKRVKEHGLHFLLDFHYSDRWADPANQWKPKAWEKLSYEELQRAVCNYTADVLRTLKEHDALPDMVQVGNEITPGMLWDEGRVSGEEHDTDEQWERFAGLVKYGIAAVKSVDSEIKIMIHIDRGGDNAESRKFYDRFEALGVEFDIIGLSYYPWWHGTLDALRDNLHDLAERYGKPINVVETAYPWTLEQPDGHEWILNQEELLLPGYPASVEGQTRYLKDLLQIVREVPGGLGAGFYYWEPAWIPSKEEWSVGHPNNWGNLTMFDFKGQKLQSFSALKAGLENETEWDEQPNAALIK.

The Proton donor role is filled by Glu-139. Residue Glu-249 is the Nucleophile of the active site.

It belongs to the glycosyl hydrolase 53 family.

This is an uncharacterized protein from Niallia circulans (Bacillus circulans).